The chain runs to 68 residues: MRCVPVFIILLLLASPAAPKSLETRIQNDLIRAGLTDADLKTEKGFLSGLLNVAGSVCCKVDTSCCSN.

A signal peptide spans 1–19 (MRCVPVFIILLLLASPAAP). Positions 20 to 54 (KSLETRIQNDLIRAGLTDADLKTEKGFLSGLLNVA) are excised as a propeptide.

This sequence belongs to the conotoxin T superfamily. Contains 2 disulfide bonds that can be either 'C1-C3, C2-C4' or 'C1-C4, C2-C3', since these disulfide connectivities have been observed for conotoxins with cysteine framework V (for examples, see AC P0DQQ7 and AC P81755). As to expression, expressed by the venom duct.

The protein resides in the secreted. In Conus leopardus (Leopard cone), this protein is Conotoxin Lp5.2.